The following is a 498-amino-acid chain: METLLKPLTSLLLSSPTPHRSIFQQNPPSLNPTTKKKSRKCHFRNESSKLFCSFLDLAPISKPESFDVNISLVDPNSGRAQFDVIIIGAGPAGLRLAEHVSKYGIKVCCVDPSPLSMWPNNYGVWVDEFENLGLEDCLDHKWPMTCVHINDHKTKYLGRPYGRVSRKKLKLRLLNSCVENRVKFYKAKVWKVEHEEFESSIVCDDGKKIRGSLVVDASGFASDFIEYDKPRNHGYQIAHGVLVEVDNHPFDLDKMVLMDWRDSHLGNEPYLRVNNAKEPTFLYAMPFDRNLVFLEETSLVSRPVLSYMEVKRRMVARLRHLGIKVRSVIEEEKCVIPMGGPLPRIPQNVMAIGGNSGIVHPSTGYMVARSMALAPVLAEAIVKGLGSTRMIRGSQLYHRVWNGLWPLDRRCIGECYSFGMETLLKLDLKGTRRLFDAFFDLDPKYWQGFLSSRLSVKELAILSLCLFGHGSNLTRLDIVTKCPVPLVRLIGNLAIESL.

Residues 1–33 (METLLKPLTSLLLSSPTPHRSIFQQNPPSLNPT) constitute a chloroplast transit peptide. The tract at residues 16-38 (PTPHRSIFQQNPPSLNPTTKKKS) is disordered. Over residues 22 to 33 (IFQQNPPSLNPT) the composition is skewed to polar residues. 84–112 (VIIIGAGPAGLRLAEHVSKYGIKVCCVDP) lines the NAD(+) pocket.

It belongs to the lycopene cyclase family.

The protein localises to the plastid. Its subcellular location is the chloroplast. The enzyme catalyses all-trans-violaxanthin = all-trans-neoxanthin. It participates in carotenoid biosynthesis; neoxanthin biosynthesis. Functionally, involved in the synthesis of neoxanthin, the last product of carotenoid synthesis and a precursor of abscisic acid. The sequence is that of Neoxanthin synthase, chloroplastic (NXS) from Solanum tuberosum (Potato).